Consider the following 649-residue polypeptide: Leucine-rich repeat transmembrane protein FLRT3 (649 aa).

A signal peptide spans 1–28 (MISPAWSIFLIGTKIGLFLQVAPLSVMA). The 30-residue stretch at 29–58 (KSCPSVCRCDAGFIYCNDRFLTSIPTGIPE) folds into the LRRNT domain. At 29-528 (KSCPSVCRCD…KEPYKNPNLP (500 aa)) the chain is on the extracellular side. 2 cysteine pairs are disulfide-bonded: cysteine 31-cysteine 37 and cysteine 35-cysteine 44. Residues 38 to 67 (DAGFIYCNDRFLTSIPTGIPEDATTLYLQN) are interaction with ADGRL3. LRR repeat units lie at residues 59-80 (DATT…SDLK), 84-104 (KVER…NLPK), 105-126 (YVKE…SLSK), 129-150 (YLEE…EGAF), 155-176 (YLRL…LPRT), 177-197 (IEEL…SLQG), 200-220 (SLKR…GDKV), 226-247 (NLTE…LPGT), 248-269 (NLRK…AFSY), and 272-293 (QLYR…IFDD). Asparagine 226 carries N-linked (GlcNAc...) asparagine glycosylation. Asparagine 282 and asparagine 296 each carry an N-linked (GlcNAc...) asparagine glycan. An LRRCT domain is found at 305 to 357 (NPWYCGCKMKWVRDWLQSLPVKVNVRGLMCQAPEKVRGMAIKDLNAELFDCKD). Residues cysteine 309 and cysteine 334 are joined by a disulfide bond. Residues 385–407 (VTKQPDIKNPKLTKDHQTTGSPS) are disordered. Residues 389-401 (PDIKNPKLTKDHQ) are compositionally biased toward basic and acidic residues. The Fibronectin type-III domain occupies 409-504 (KTITITVKSV…VCIETETAPL (96 aa)). The helical transmembrane segment at 529 to 549 (LAAIIGGAVALVTIALLALVC) threads the bilayer. Over 550–649 (WYVHRNGSLF…GIPDSDHSHS (100 aa)) the chain is Cytoplasmic. Positions 622–649 (LYKNNHSESSSNRSYRDSGIPDSDHSHS) are disordered.

As to quaternary structure, monomer and homodimer. Self-associates (via leucine-rich repeats), giving rise to homooligomers. Interacts with FGFR1. Interacts (via extracellular domain) with ADGRL1/LPHN1 and LPHN2 (via olfactomedin-like domain). Interacts (via extracellular domain) with ADGRL3 (via olfactomedin-like domain); the interaction is direct. Interacts (via extracellular domain) with UNC5B and UNC5D (via extracellular domain); the interaction is direct. Identified in complexes composed of FLRT3, ADGRL3 and UNC5B, respectively FLRT3, ADGRL3 and UNC5D. May also interact (via extracellular domain) with UNC5A and UNC5C. Interacts (via cytoplasmic domain) with ROBO1. In terms of processing, N-glycosylated. Post-translationally, proteolytic cleavage in the juxtamembrane region gives rise to a soluble ectodomain. Cleavage is probably effected by a metalloprotease.

Its subcellular location is the cell membrane. The protein resides in the presynaptic cell membrane. The protein localises to the endoplasmic reticulum membrane. It localises to the cell junction. It is found in the focal adhesion. Its subcellular location is the secreted. The protein resides in the cell projection. The protein localises to the axon. It localises to the growth cone membrane. Its function is as follows. Functions in cell-cell adhesion, cell migration and axon guidance, exerting an attractive or repulsive role depending on its interaction partners. Plays a role in the spatial organization of brain neurons. Plays a role in vascular development in the retina. Plays a role in cell-cell adhesion via its interaction with ADGRL3 and probably also other latrophilins that are expressed at the surface of adjacent cells. Interaction with the intracellular domain of ROBO1 mediates axon attraction towards cells expressing NTN1. Mediates axon growth cone collapse and plays a repulsive role in neuron guidance via its interaction with UNC5B, and possibly also other UNC-5 family members. Promotes neurite outgrowth (in vitro). Mediates cell-cell contacts that promote an increase both in neurite number and in neurite length. Plays a role in the regulation of the density of glutamaergic synapses. Plays a role in fibroblast growth factor-mediated signaling cascades. Required for normal morphogenesis during embryonic development, but not for normal embryonic patterning. Required for normal ventral closure, headfold fusion and definitive endoderm migration during embryonic development. Required for the formation of a normal basement membrane and the maintenance of a normal anterior visceral endoderm during embryonic development. This Pongo abelii (Sumatran orangutan) protein is Leucine-rich repeat transmembrane protein FLRT3 (FLRT3).